Reading from the N-terminus, the 89-residue chain is Large ribosomal subunit protein eL43 (89 aa).

Residues Cys38, Cys41, Cys56, and Cys59 each contribute to the Zn(2+) site. The segment at 38–59 adopts a C4-type zinc-finger fold; that stretch reads CPVCHKRAVKRVGTGIWRCTKC.

It belongs to the eukaryotic ribosomal protein eL43 family. Putative zinc-binding subfamily. Part of the 50S ribosomal subunit. Zn(2+) serves as cofactor.

In terms of biological role, binds to the 23S rRNA. In Methanopyrus kandleri (strain AV19 / DSM 6324 / JCM 9639 / NBRC 100938), this protein is Large ribosomal subunit protein eL43.